We begin with the raw amino-acid sequence, 180 residues long: Ribosome maturation factor RimM (180 aa).

The region spanning 99-172 (EDEFYQVDLI…FLVVDPVAAG (74 aa)) is the PRC barrel domain.

It belongs to the RimM family. Binds ribosomal protein uS19.

The protein localises to the cytoplasm. In terms of biological role, an accessory protein needed during the final step in the assembly of 30S ribosomal subunit, possibly for assembly of the head region. Essential for efficient processing of 16S rRNA. May be needed both before and after RbfA during the maturation of 16S rRNA. It has affinity for free ribosomal 30S subunits but not for 70S ribosomes. This Bartonella henselae (strain ATCC 49882 / DSM 28221 / CCUG 30454 / Houston 1) (Rochalimaea henselae) protein is Ribosome maturation factor RimM.